Consider the following 436-residue polypeptide: Prenyltransferase nscD (436 aa).

Belongs to the tryptophan dimethylallyltransferase family.

The protein operates within secondary metabolite biosynthesis. In terms of biological role, prenyltransferase; part of the gene cluster that mediates the biosynthesis of neosartoricin B, a prenylated anthracenone that probably exhibits T-cell antiproliferative activity, suggestive of a physiological role as an immunosuppressive agent. The non-reducing polyketide synthase nscA probably synthesizes and cyclizes the decaketide backbone. The hydrolase nscB then mediates the product release through hydrolysis followed by spontaneous decarboxylation. The prenyltransferase nscD catalyzes the addition of the dimethylallyl group to the aromatic C5. The FAD-dependent monooxygenase nscC is then responsible for the stereospecific hydroxylation at C2. Neosartoricin B can be converted into two additional compounds neosartoricins C and D. Neosartoricin C is a spirocyclic compound that is cyclized through the attack of C3 hydroxyl on C14, followed by dehydration. On the other hand, neosartoricin D is a further cyclized compound in which attack of C2 on C14 in neosartoricin C results in the formation of the acetal-containing dioxabicyclo-octanone ring. Both of these compounds are novel and possibly represent related metabolites of the gene cluster. The polypeptide is Prenyltransferase nscD (Arthroderma gypseum (strain ATCC MYA-4604 / CBS 118893) (Microsporum gypseum)).